A 62-amino-acid chain; its full sequence is Chromatin protein Cren7 2 (62 aa).

The protein belongs to the Cren7 family. Monomer. Post-translationally, methylated at multiple sites, to varying extents.

The protein resides in the chromosome. Its subcellular location is the cytoplasm. A chromatin protein, binds double-stranded DNA without sequence specificity. Constrains negative DNA supercoils. This is Chromatin protein Cren7 2 (cren7-2) from Hyperthermus butylicus (strain DSM 5456 / JCM 9403 / PLM1-5).